Reading from the N-terminus, the 839-residue chain is Probable beta-glucosidase I (839 aa).

A glycan (N-linked (GlcNAc...) asparagine) is linked at Asn-197. Asp-225 is an active-site residue. A PA14 domain is found at 395–555; the sequence is DGKTGFSFKV…GQEELISNAV (161 aa). Asn-620 carries an N-linked (GlcNAc...) asparagine glycan.

This sequence belongs to the glycosyl hydrolase 3 family.

It is found in the secreted. It catalyses the reaction Hydrolysis of terminal, non-reducing beta-D-glucosyl residues with release of beta-D-glucose.. It functions in the pathway glycan metabolism; cellulose degradation. In terms of biological role, beta-glucosidases are one of a number of cellulolytic enzymes involved in the degradation of cellulosic biomass. Catalyzes the last step releasing glucose from the inhibitory cellobiose. In Aspergillus oryzae (strain ATCC 42149 / RIB 40) (Yellow koji mold), this protein is Probable beta-glucosidase I (bglI).